The following is a 265-amino-acid chain: Type 1 encapsulin shell protein (265 aa).

FMN contacts are provided by residues 79-81 (RAT) and tryptophan 87. The interval 184-189 (EAGHYP) is pore-forming loop. Residue glutamate 235 coordinates FMN.

This sequence belongs to the encapsulin family. Family 1 subfamily. This encapsulin nanocompartment is formed by 60 subunits; monomers form pentamers which assemble to form shells. There are 12 pores where the pentamers meet as well as 3-fold axis channels and dimer channels; none are larger than 3-4 Angstroms in diameter. The N-terminus of the protein is inside the shell, the C-terminus is outside. Requires FMN as cofactor.

It localises to the encapsulin nanocompartment. In terms of biological role, shell component of a type 1 encapsulin nanocompartment. Assembles into proteinaceous shells 23-24 nm in diameter with 2-2.5 nm thick walls. Cargo protein Flp (ferritin-like protein, may store iron) is targeted to the interior via its C-terminal extension. This is Type 1 encapsulin shell protein from Thermotoga petrophila (strain ATCC BAA-488 / DSM 13995 / JCM 10881 / RKU-1).